The sequence spans 236 residues: Octanoyltransferase (236 aa).

The 185-residue stretch at 36–220 (DQVPDTVLLL…HLAAVLGASS (185 aa)) folds into the BPL/LPL catalytic domain. Substrate-binding positions include 76–83 (RGGKITWH), 150–152 (AIG), and 163–165 (GFA). Cysteine 181 (acyl-thioester intermediate) is an active-site residue.

Belongs to the LipB family.

The protein resides in the cytoplasm. The catalysed reaction is octanoyl-[ACP] + L-lysyl-[protein] = N(6)-octanoyl-L-lysyl-[protein] + holo-[ACP] + H(+). It participates in protein modification; protein lipoylation via endogenous pathway; protein N(6)-(lipoyl)lysine from octanoyl-[acyl-carrier-protein]: step 1/2. Functionally, catalyzes the transfer of endogenously produced octanoic acid from octanoyl-acyl-carrier-protein onto the lipoyl domains of lipoate-dependent enzymes. Lipoyl-ACP can also act as a substrate although octanoyl-ACP is likely to be the physiological substrate. In Thermobifida fusca (strain YX), this protein is Octanoyltransferase.